A 334-amino-acid polypeptide reads, in one-letter code: Homoserine kinase (334 aa).

Belongs to the pseudomonas-type ThrB family.

The catalysed reaction is L-homoserine + ATP = O-phospho-L-homoserine + ADP + H(+). Its pathway is amino-acid biosynthesis; L-threonine biosynthesis; L-threonine from L-aspartate: step 4/5. This is Homoserine kinase from Cupriavidus taiwanensis (strain DSM 17343 / BCRC 17206 / CCUG 44338 / CIP 107171 / LMG 19424 / R1) (Ralstonia taiwanensis (strain LMG 19424)).